A 144-amino-acid polypeptide reads, in one-letter code: UPF0102 protein BURPS668_3819 (144 aa).

The segment at 1–28 (MCHAREASLGTGEPEAAPRDNFPREAGS) is disordered. The segment covering 16-28 (AAPRDNFPREAGS) has biased composition (basic and acidic residues).

The protein belongs to the UPF0102 family.

The sequence is that of UPF0102 protein BURPS668_3819 from Burkholderia pseudomallei (strain 668).